We begin with the raw amino-acid sequence, 54 residues long: uncharacterized protein (54 aa).

The first 13 residues, 1–13, serve as a signal peptide directing secretion; sequence MLLCFHMCQRIMW.

It is found in the secreted. This is an uncharacterized protein from Saccharomyces cerevisiae (strain ATCC 204508 / S288c) (Baker's yeast).